A 284-amino-acid polypeptide reads, in one-letter code: MAVDIQYSYSSMAPSLRRERFTFKISPKLSKPLRPCIQLGSKDEASGMVAPAVQEKKVKKRVSFADNQGLALTMVKVFSEFDDPLDIPFNITELLDNIVSLTTAESESFVLDFPQPSADYLDFRNRLQTNHVCLENCVLKDKAIAGTVKVQNLAFEKVVKIRMTFDTWKSFTDFPCQYVKDTYAGSDRDTFSFDISLPEKIQSYERMEFAVCYECNGQAYWDSNKGKNYRITRAELRSSPGKIEPYNGPDFGISFDQFGSPRCSFGLFPEWPSYLGYEKLGPYY.

Positions 61-64 match the PP1-binding motif motif; that stretch reads RVSF. The 109-residue stretch at 124 to 232 folds into the CBM21 domain; that stretch reads RNRLQTNHVC…SNKGKNYRIT (109 aa). Serine 260 is subject to Phosphoserine.

Interacts with glycogen, PPP1CC catalytic subunit of PP1 and PYGL. Associates with glycogen particles. Forms complexes with debranching enzyme, glycogen phosphorylase, glycogen synthase and phosphorylase kinase which is necessary for its regulation of PP1 activity. As to expression, highly expressed in liver (at protein level). Expressed predominantly in liver. Expressed moderately in heart. Expressed weakly in prostate, stomach, thyroid, lung, kidney, spleen and skeletal muscle.

Acts as a glycogen-targeting subunit for phosphatase PP1. Facilitates interaction of the PP1 with enzymes of the glycogen metabolism and regulates its activity. Suppresses the rate at which PP1 dephosphorylates (inactivates) glycogen phosphorylase and enhances the rate at which it activates glycogen synthase and therefore limits glycogen breakdown. Its activity is inhibited by PYGL, resulting in inhibition of the glycogen synthase and glycogen phosphorylase phosphatase activities of PP1. Dramatically increases basal and insulin-stimulated glycogen synthesis upon overexpression in hepatocytes. In Mus musculus (Mouse), this protein is Protein phosphatase 1 regulatory subunit 3B (Ppp1r3b).